Consider the following 395-residue polypeptide: Capsid protein (395 aa).

Basic residues predominate over residues 1 to 41; the sequence is MARKYAKRSKSRPRTARRSPKSRSRPRSRAPRRKAPSRPRI. Residues 1–51 form a disordered region; sequence MARKYAKRSKSRPRTARRSPKSRSRPRSRAPRRKAPSRPRIQRVNPVRRPM. A Nuclear localization signal motif is present at residues 2 to 9; that stretch reads ARKYAKRS.

The protein resides in the host nucleus. The protein localises to the virion. Functionally, self-assembles to form the virion icosahedral capsid. This Chaetoceros setoense (Chaetoceros setoense DNA virus) protein is Capsid protein.